A 755-amino-acid polypeptide reads, in one-letter code: Atypical kinase coq-8, mitochondrial (755 aa).

The tract at residues 57-78 (QDVDPLKEPNKTNAPLLSPTLP) is disordered. The segment covering 67–78 (KTNAPLLSPTLP) has biased composition (polar residues). ATP is bound by residues 435–443 (FACASIGQV) and K457. Residue D587 is the Proton acceptor of the active site.

The protein belongs to the protein kinase superfamily. ADCK protein kinase family.

The protein localises to the mitochondrion. It participates in cofactor biosynthesis; ubiquinone biosynthesis. Atypical kinase involved in the biosynthesis of coenzyme Q, also named ubiquinone, an essential lipid-soluble electron transporter for aerobic cellular respiration. Its substrate specificity is still unclear: may act as a protein kinase that mediates phosphorylation of coq-3. According to other reports, acts as a small molecule kinase, possibly a lipid kinase that phosphorylates a prenyl lipid in the ubiquinone biosynthesis pathway, as suggested by its ability to bind coenzyme Q lipid intermediates. The protein is Atypical kinase coq-8, mitochondrial (coq-8) of Caenorhabditis elegans.